The primary structure comprises 350 residues: MIILGIETSCDETSASVLHNGVVLSNIVSSQHCHTSFGGVVPELASREHERLITAITETAINEANIQKDALDVIAATAGPGLIGAIMVGLCFAQGMACALNIPFVPINHIEAHIFSPFINSGANSPLPKEGYISLTVSGGHTLLALVKPDLSYTIVGKTLDDAAGEAFDKTGKMIGLPYPAGPVIDKLAENGNPNFYHFPRALTSRSKSRKSWEGNLDFSFSGMKTSVLTWLQQQSPESVASNLPDIAASIQAAIVDVLVEKSIAAAKHYNVSTIAIAGGVSANRGLRSSMQAACQQHGITLCLPETIYSTDNAAMIASIAALKLSHGMEPLYRYNVAPYASFLHKDNFS.

Fe cation is bound by residues His109 and His113. Residues 136–140 (TVSGG), Asp169, Gly182, Asp186, and Asn284 each bind substrate. Asp312 is a binding site for Fe cation.

This sequence belongs to the KAE1 / TsaD family. Requires Fe(2+) as cofactor.

The protein resides in the cytoplasm. The enzyme catalyses L-threonylcarbamoyladenylate + adenosine(37) in tRNA = N(6)-L-threonylcarbamoyladenosine(37) in tRNA + AMP + H(+). Required for the formation of a threonylcarbamoyl group on adenosine at position 37 (t(6)A37) in tRNAs that read codons beginning with adenine. Is involved in the transfer of the threonylcarbamoyl moiety of threonylcarbamoyl-AMP (TC-AMP) to the N6 group of A37, together with TsaE and TsaB. TsaD likely plays a direct catalytic role in this reaction. The polypeptide is tRNA N6-adenosine threonylcarbamoyltransferase (Chlorobium chlorochromatii (strain CaD3)).